A 189-amino-acid chain; its full sequence is dCTP deaminase (189 aa).

Residues lysine 112–arginine 117, threonine 136–glutamate 138, glutamine 157, tyrosine 171, and glutamine 181 each bind dCTP. Glutamate 138 serves as the catalytic Proton donor/acceptor.

The protein belongs to the dCTP deaminase family. In terms of assembly, homotrimer.

It catalyses the reaction dCTP + H2O + H(+) = dUTP + NH4(+). Its pathway is pyrimidine metabolism; dUMP biosynthesis; dUMP from dCTP (dUTP route): step 1/2. Functionally, catalyzes the deamination of dCTP to dUTP. The protein is dCTP deaminase of Paraburkholderia phymatum (strain DSM 17167 / CIP 108236 / LMG 21445 / STM815) (Burkholderia phymatum).